A 757-amino-acid chain; its full sequence is DNA replication licensing factor mcm5 (757 aa).

The region spanning 319 to 523 is the MCM domain; the sequence is LRNIIASSIA…KRDFIISKHV (205 aa). The Arginine finger signature appears at 499–502; it reads SRFD. Residues 606–625 are disordered; it reads INNGSYGGGGSKNSVETERK.

Belongs to the MCM family. Component of the MCM2-7 complex. The complex forms a toroidal hexameric ring with the proposed subunit order MCM2-MCM6-MCM4-MCM7-MCM3-MCM5 (By simililarity).

The protein localises to the nucleus. It localises to the cytoplasm. It is found in the cytosol. The catalysed reaction is ATP + H2O = ADP + phosphate + H(+). Its function is as follows. Acts as a component of the MCM2-7 complex (MCM complex) which is the replicative helicase essential for 'once per cell cycle' DNA replication initiation and elongation in eukaryotic cells. Core component of CDC45-MCM-GINS (CMG) helicase, the molecular machine that unwinds template DNA during replication, and around which the replisome is built. The active ATPase sites in the MCM2-7 ring are formed through the interaction surfaces of two neighboring subunits such that a critical structure of a conserved arginine finger motif is provided in trans relative to the ATP-binding site of the Walker A box of the adjacent subunit. The six ATPase active sites, however, are likely to contribute differentially to the complex helicase activity. This is DNA replication licensing factor mcm5 (mcm5) from Dictyostelium discoideum (Social amoeba).